The primary structure comprises 503 residues: Glutamate--tRNA ligase (503 aa).

Positions 9-19 match the 'HIGH' region motif; the sequence is PSPTGDPHVGT. The 'KMSKS' region signature appears at 251–255; the sequence is KLSKR. Residue Lys-254 participates in ATP binding.

Belongs to the class-I aminoacyl-tRNA synthetase family. Glutamate--tRNA ligase type 1 subfamily. As to quaternary structure, monomer.

Its subcellular location is the cytoplasm. It catalyses the reaction tRNA(Glu) + L-glutamate + ATP = L-glutamyl-tRNA(Glu) + AMP + diphosphate. Its function is as follows. Catalyzes the attachment of glutamate to tRNA(Glu) in a two-step reaction: glutamate is first activated by ATP to form Glu-AMP and then transferred to the acceptor end of tRNA(Glu). The polypeptide is Glutamate--tRNA ligase (Saccharophagus degradans (strain 2-40 / ATCC 43961 / DSM 17024)).